We begin with the raw amino-acid sequence, 404 residues long: Cysteine desulfurase IscS (404 aa).

Residues 75–76 (AT), N155, Q183, and 203–205 (SSH) contribute to the pyridoxal 5'-phosphate site. Residue K206 is modified to N6-(pyridoxal phosphate)lysine. T243 contributes to the pyridoxal 5'-phosphate binding site. C328 (cysteine persulfide intermediate) is an active-site residue. C328 provides a ligand contact to [2Fe-2S] cluster.

Belongs to the class-V pyridoxal-phosphate-dependent aminotransferase family. NifS/IscS subfamily. As to quaternary structure, homodimer. Forms a heterotetramer with IscU, interacts with other sulfur acceptors. It depends on pyridoxal 5'-phosphate as a cofactor.

It is found in the cytoplasm. It catalyses the reaction (sulfur carrier)-H + L-cysteine = (sulfur carrier)-SH + L-alanine. Its pathway is cofactor biosynthesis; iron-sulfur cluster biosynthesis. Master enzyme that delivers sulfur to a number of partners involved in Fe-S cluster assembly, tRNA modification or cofactor biosynthesis. Catalyzes the removal of elemental sulfur atoms from cysteine to produce alanine. Functions as a sulfur delivery protein for Fe-S cluster synthesis onto IscU, an Fe-S scaffold assembly protein, as well as other S acceptor proteins. In Pasteurella multocida (strain Pm70), this protein is Cysteine desulfurase IscS.